A 260-amino-acid polypeptide reads, in one-letter code: Thiamine thiazole synthase (260 aa).

NAD(+) contacts are provided by residues Ala36, 55 to 56 (EQ), Gly63, and 154 to 156 (HVD). Fe cation contacts are provided by Asp156 and His171. NAD(+) is bound at residue Met224. Arg234 serves as a coordination point for glycine.

Belongs to the THI4 family. As to quaternary structure, homooctamer; tetramer of dimers. It depends on Fe(2+) as a cofactor.

The catalysed reaction is hydrogen sulfide + glycine + NAD(+) = ADP-5-ethyl-4-methylthiazole-2-carboxylate + nicotinamide + 3 H2O + H(+). The protein operates within cofactor biosynthesis; thiamine diphosphate biosynthesis. Functionally, involved in the biosynthesis of the thiazole moiety of thiamine. Catalyzes the conversion of NAD and glycine to adenosine diphosphate 5-(2-hydroxyethyl)-4-methylthiazole-2-carboxylate (ADT), an adenylated thiazole intermediate, using free sulfide as a source of sulfur. In Methanosarcina mazei (strain ATCC BAA-159 / DSM 3647 / Goe1 / Go1 / JCM 11833 / OCM 88) (Methanosarcina frisia), this protein is Thiamine thiazole synthase.